The sequence spans 222 residues: Probable transaldolase (222 aa).

Residue Lys91 is the Schiff-base intermediate with substrate of the active site.

It belongs to the transaldolase family. Type 3B subfamily.

It localises to the cytoplasm. The enzyme catalyses D-sedoheptulose 7-phosphate + D-glyceraldehyde 3-phosphate = D-erythrose 4-phosphate + beta-D-fructose 6-phosphate. It functions in the pathway carbohydrate degradation; pentose phosphate pathway; D-glyceraldehyde 3-phosphate and beta-D-fructose 6-phosphate from D-ribose 5-phosphate and D-xylulose 5-phosphate (non-oxidative stage): step 2/3. Its function is as follows. Transaldolase is important for the balance of metabolites in the pentose-phosphate pathway. This is Probable transaldolase from Chlorobium chlorochromatii (strain CaD3).